A 272-amino-acid polypeptide reads, in one-letter code: UPF0759 protein YecE (272 aa).

The protein belongs to the UPF0759 family.

This Escherichia coli O157:H7 protein is UPF0759 protein YecE (yecE).